The following is a 159-amino-acid chain: 2-C-methyl-D-erythritol 2,4-cyclodiphosphate synthase (159 aa).

Asp-10 and His-12 together coordinate a divalent metal cation. 4-CDP-2-C-methyl-D-erythritol 2-phosphate contacts are provided by residues 10 to 12 (DVH) and 36 to 37 (HS). His-44 is an a divalent metal cation binding site. 4-CDP-2-C-methyl-D-erythritol 2-phosphate contacts are provided by residues 58–60 (DIG), 134–137 (TTTE), Phe-141, and Arg-144.

It belongs to the IspF family. In terms of assembly, homotrimer. It depends on a divalent metal cation as a cofactor.

The catalysed reaction is 4-CDP-2-C-methyl-D-erythritol 2-phosphate = 2-C-methyl-D-erythritol 2,4-cyclic diphosphate + CMP. Its pathway is isoprenoid biosynthesis; isopentenyl diphosphate biosynthesis via DXP pathway; isopentenyl diphosphate from 1-deoxy-D-xylulose 5-phosphate: step 4/6. Functionally, involved in the biosynthesis of isopentenyl diphosphate (IPP) and dimethylallyl diphosphate (DMAPP), two major building blocks of isoprenoid compounds. Catalyzes the conversion of 4-diphosphocytidyl-2-C-methyl-D-erythritol 2-phosphate (CDP-ME2P) to 2-C-methyl-D-erythritol 2,4-cyclodiphosphate (ME-CPP) with a corresponding release of cytidine 5-monophosphate (CMP). This chain is 2-C-methyl-D-erythritol 2,4-cyclodiphosphate synthase, found in Bacteroides fragilis (strain ATCC 25285 / DSM 2151 / CCUG 4856 / JCM 11019 / LMG 10263 / NCTC 9343 / Onslow / VPI 2553 / EN-2).